The sequence spans 145 residues: uncharacterized protein (145 aa).

The protein belongs to the asfivirus K145R family.

Its subcellular location is the virion. This is an uncharacterized protein from Ornithodoros (relapsing fever ticks).